Consider the following 234-residue polypeptide: Transmembrane protein 65 (234 aa).

A mitochondrion-targeting transit peptide spans Met-1 to Glu-55. Over Pro-56–Tyr-110 the chain is Cytoplasmic. The helical transmembrane segment at Val-111–Ile-131 threads the bilayer. Topologically, residues Val-132–Glu-138 are extracellular. A helical membrane pass occupies residues Leu-139 to Val-159. Topologically, residues Ser-160–Lys-203 are cytoplasmic. A helical membrane pass occupies residues Ala-204–Ser-224. Topologically, residues Glu-225–Asn-234 are extracellular.

Monomer. Homodimer. Interacts with GJA1. Interacts weakly with DSP. Interacts with SCN1B. As to expression, predominantly expressed in the ventricular tissue (at protein level).

Its subcellular location is the cell membrane. It localises to the mitochondrion inner membrane. In terms of biological role, essential for maintaining proper cardiac intercalated disk (ICD) structure and function as well as cardiac conduction velocity in the heart. Its association with SCN1B is required for stabilizing the perinexus in the ICD and for localization of GJA1 and SCN5A to the ICD. May regulate the function of the gap junction protein GJA1 and may contribute to the stability and proper localization of GJA1 to cardiac intercalated disk thereby regulating gap junction communication. Regulates mitochondrial respiration and mitochondrial DNA copy number maintenance. The protein is Transmembrane protein 65 (Tmem65) of Mus musculus (Mouse).